The following is a 314-amino-acid chain: tRNA dimethylallyltransferase (314 aa).

13–20 lines the ATP pocket; sequence GPTAVGKT. 15-20 provides a ligand contact to substrate; sequence TAVGKT. Residues 38–41 are interaction with substrate tRNA; that stretch reads DSMQ.

Belongs to the IPP transferase family. Monomer. It depends on Mg(2+) as a cofactor.

The catalysed reaction is adenosine(37) in tRNA + dimethylallyl diphosphate = N(6)-dimethylallyladenosine(37) in tRNA + diphosphate. Its function is as follows. Catalyzes the transfer of a dimethylallyl group onto the adenine at position 37 in tRNAs that read codons beginning with uridine, leading to the formation of N6-(dimethylallyl)adenosine (i(6)A). The protein is tRNA dimethylallyltransferase of Bacillus licheniformis (strain ATCC 14580 / DSM 13 / JCM 2505 / CCUG 7422 / NBRC 12200 / NCIMB 9375 / NCTC 10341 / NRRL NRS-1264 / Gibson 46).